A 1270-amino-acid chain; its full sequence is Activating transcription factor 7-interacting protein 1 (1270 aa).

Met-1 is subject to N-acetylmethionine. Lys-33 is covalently cross-linked (Glycyl lysine isopeptide (Lys-Gly) (interchain with G-Cter in SUMO2)). A phosphoserine mark is found at Ser-57 and Ser-113. Disordered regions lie at residues 104-223 and 235-402; these read DDDL…ISGD and TSVD…EDET. Thr-118 bears the Phosphothreonine mark. 2 stretches are compositionally biased toward low complexity: residues 132–203 and 248–269; these read GDPA…SSGD and DPASDDLASGDLSSSELASDDL. Composition is skewed to basic and acidic residues over residues 310–327 and 333–343; these read SNKDDDFLEKNGADEKLE and DSLDEKNKADN. The span at 347–356 shows a compositional bias: acidic residues; the sequence is ANEETLETDD. A compositionally biased stretch (basic and acidic residues) spans 363-373; sequence RPPENEKKVEE. Phosphoserine occurs at positions 445, 473, 474, 477, 479, and 496. 4 disordered regions span residues 455–570, 658–685, 822–862, and 886–906; these read TSLL…SKRR, EDLKKRHEHPPNPPVSPGKTVNDVNSNN, PPTV…PTAS, and RTSLPTVGPSGLYSPSTNRGP. Polar residues predominate over residues 474 to 486; sequence SFGSPSKQESSES. Residues 496-509 are compositionally biased toward acidic residues; that stretch reads SDEEDISGEKDESE. Positions 524-552 are enriched in basic and acidic residues; it reads SNEKDNKPEEEEQVIHEDDERPSEKNEFS. Positions 553 to 571 match the Nuclear localization signal motif; sequence RRKRSKSEDMDNVQSKRRR. A Glycyl lysine isopeptide (Lys-Gly) (interchain with G-Cter in SUMO2) cross-link involves residue Lys-558. At Ser-559 the chain carries Phosphoserine. The interaction with SETDB1 stretch occupies residues 562–817; that stretch reads MDNVQSKRRR…NQPSGNVEFI (256 aa). A coiled-coil region spans residues 617–665; that stretch reads KTLAELKTRVEKIECNKRHKTVLTELQAKIARLTKRFEAAKEDLKKRHE. Ser-673 is subject to Phosphoserine. A compositionally biased stretch (polar residues) spans 822–834; sequence PPTVSGLTKNPVS. The span at 843 to 854 shows a compositional bias: low complexity; sequence KPNNVPSVPSPS. Residue Ser-899 is modified to Phosphoserine. Residues Lys-910 and Lys-938 each participate in a glycyl lysine isopeptide (Lys-Gly) (interchain with G-Cter in SUMO2) cross-link. Composition is skewed to polar residues over residues 918–942 and 950–964; these read TSSAAEQNSNTTPRIENQTNKTIDA and DSTSQCGKATGSDSS. Disordered regions lie at residues 918–1026 and 1115–1160; these read TSSA…SQTT and STGP…STSL. An interaction with SUMO region spans residues 965 to 975; it reads GVIDLTMDDEE. Polar residues-rich tracts occupy residues 988–999 and 1016–1026; these read TPVSTMSSSQPV and GVPTSGPSQTT. Residues 1134–1151 are compositionally biased toward pro residues; sequence PRPVHPAPLPEAPQPQRL. The segment at 1154–1270 is interaction with MBD1; that stretch reads EAASTSLPQK…TDVISSTQSS (117 aa). The Fibronectin type-III domain occupies 1160–1270; it reads LPQKPHLKLA…TDVISSTQSS (111 aa).

It belongs to the MCAF family. Interacts with MBD1; the interaction is enhanced when MBD1 is sumoylated. Interacts with SETDB1; the interaction protects SETDB1 from proteasomal degradation and is required to stimulate histone methyltransferase activity and facilitate the conversion of dimethylated to trimethylated H3 'Lys-9'. Interacts with SUMO ubiquitin-like proteins (SUMO1, SUNO2 and SUMO3), with a preference for SUMO2 and SUMO3. Interacts with SP1, ATF7 and ZHX1. Interacts with the general transcription machinery, including ERCC2, ERCC3, GTF2E1, GTF2E2 and POLR2A. In terms of assembly, (Microbial infection) Interacts with Epstein-Barr virus BRLF1/Rta protein, leading to the regulation of host genes in Epstein-Barr virus-infected cells. In terms of tissue distribution, detected at low levels in breast, lung and stomach; highly up-regulated in the corresponding cancerous tissues (at protein level).

It localises to the nucleus. In terms of biological role, recruiter that couples transcriptional factors to general transcription apparatus and thereby modulates transcription regulation and chromatin formation. Can both act as an activator or a repressor depending on the context. Required for HUSH-mediated heterochromatin formation and gene silencing. Mediates MBD1-dependent transcriptional repression, probably by recruiting complexes containing SETDB1. Stabilizes SETDB1, is required to stimulate histone methyltransferase activity of SETDB1 and facilitates the conversion of dimethylated to trimethylated H3 'Lys-9' (H3K9me3). The complex formed with MBD1 and SETDB1 represses transcription and couples DNA methylation and histone H3 'Lys-9' trimethylation (H3K9me3). Facilitates telomerase TERT and TERC gene expression by SP1 in cancer cells. This chain is Activating transcription factor 7-interacting protein 1, found in Homo sapiens (Human).